Consider the following 212-residue polypeptide: Fibroblast growth factor 8b (212 aa).

The first 27 residues, 1–27, serve as a signal peptide directing secretion; the sequence is MRLKSSRLGYLFLQFMTLCFYTQMTMQ. An N-linked (GlcNAc...) asparagine glycan is attached at Asn139.

It belongs to the heparin-binding growth factors family.

It is found in the secreted. May act as signaling molecule during development of the midbrain-hindbrain boundary (MHB) organizer, and be involved in patterning of the nervous system. In Danio rerio (Zebrafish), this protein is Fibroblast growth factor 8b (fgf8b).